A 440-amino-acid polypeptide reads, in one-letter code: Adenylosuccinate synthetase 1, chloroplastic (440 aa).

GTP is bound by residues 13 to 19 and 41 to 43; these read GDEGKGK and GHT. Asp14 serves as the catalytic Proton acceptor. Mg(2+)-binding residues include Asp14 and Gly41. IMP contacts are provided by residues 14 to 17, 39 to 42, Thr135, Arg149, Gln230, Thr245, and Arg313; these read DEGK and NAGH. His42 serves as the catalytic Proton donor. 309–315 contacts substrate; the sequence is TVTRRKR. GTP-binding positions include Arg315 and 341-343; that span reads KLD.

It belongs to the adenylosuccinate synthetase family. In terms of assembly, homodimer. The cofactor is Mg(2+).

The protein localises to the plastid. It is found in the chloroplast. The catalysed reaction is IMP + L-aspartate + GTP = N(6)-(1,2-dicarboxyethyl)-AMP + GDP + phosphate + 2 H(+). Its pathway is purine metabolism; AMP biosynthesis via de novo pathway; AMP from IMP: step 1/2. Its function is as follows. Plays an important role in the de novo pathway and in the salvage pathway of purine nucleotide biosynthesis. Catalyzes the first committed step in the biosynthesis of AMP from IMP. In Ricinus communis (Castor bean), this protein is Adenylosuccinate synthetase 1, chloroplastic.